The chain runs to 509 residues: tRNA (guanine(37)-N(1))-methyltransferase (509 aa).

The N-terminal 57 residues, 1–57 (MVLWILWRPFGFSRRLLKLERHSITESKSLIPLAWTSLTQTLSESPGIFLLGQRKRF), are a transit peptide targeting the mitochondrion. S-adenosyl-L-methionine is bound by residues histidine 289, 327-328 (DL), 355-356 (DG), and asparagine 387. The segment at 478–509 (TKNPENHEDPPLKRQRTAEAFSDEKTQIASNT) is disordered.

This sequence belongs to the class I-like SAM-binding methyltransferase superfamily. TRM5/TYW2 family. As to quaternary structure, monomer.

Its subcellular location is the mitochondrion matrix. It is found in the nucleus. The protein resides in the cytoplasm. The enzyme catalyses guanosine(37) in tRNA + S-adenosyl-L-methionine = N(1)-methylguanosine(37) in tRNA + S-adenosyl-L-homocysteine + H(+). Functionally, involved in mitochondrial tRNA methylation. Specifically methylates the N1 position of guanosine-37 in various tRNAs. Methylation is not dependent on the nature of the nucleoside 5' of the target nucleoside. This is the first step in the biosynthesis of wybutosine (yW), a modified base adjacent to the anticodon of tRNAs and required for accurate decoding. In Macaca fascicularis (Crab-eating macaque), this protein is tRNA (guanine(37)-N(1))-methyltransferase.